The following is a 375-amino-acid chain: Enoyl-[acyl-carrier-protein] reductase [NADH] 1, chloroplastic (375 aa).

Residues Met1 to Arg67 constitute a chloroplast transit peptide. NAD(+) is bound by residues Gly91, Tyr98, Asp155–Ala156, Ser202–Leu203, and Leu252. Active-site proton acceptor residues include Tyr254 and Tyr264. Residues Lys272 and Leu302–Ala306 contribute to the NAD(+) site.

This sequence belongs to the short-chain dehydrogenases/reductases (SDR) family. FabI subfamily. In terms of assembly, homotetramer.

It is found in the plastid. The protein localises to the chloroplast. It carries out the reaction a 2,3-saturated acyl-[ACP] + NAD(+) = a (2E)-enoyl-[ACP] + NADH + H(+). The protein operates within lipid metabolism; fatty acid biosynthesis. Its function is as follows. Catalyzes the NAD-dependent reduction of a carbon-carbon double bond in an enoyl moiety that is covalently linked to an acyl carrier protein (ACP). Catalyzes the last reduction step in the de novo synthesis cycle of fatty acids. Involved in the elongation cycle of fatty acids which are used in lipid metabolism. Required for normal plant growth. This Oryza sativa subsp. japonica (Rice) protein is Enoyl-[acyl-carrier-protein] reductase [NADH] 1, chloroplastic.